Here is a 473-residue protein sequence, read N- to C-terminus: Sensor histidine kinase YclK (473 aa).

At 1–9 the chain is on the cytoplasmic side; sequence MMKIKYLYQ. A helical membrane pass occupies residues 10–30; that stretch reads LLLSHISILILAFVIIISLFS. The Extracellular portion of the chain corresponds to 31 to 164; that stretch reads HFVKEFAYQN…GVEQMVNQVN (134 aa). The helical transmembrane segment at 165–185 threads the bilayer; that stretch reads LYMFYAVISTLVITILVSWLL. Residues 186-473 are Cytoplasmic-facing; sequence SKFHVKRIQK…IRLPLTAKQQ (288 aa). The region spanning 187–239 is the HAMP domain; sequence KFHVKRIQKLREATDKVASGDYDIHLENSYGDEIGVLASDFNIMAKKLKQSRD. A Histidine kinase domain is found at 254–470; the sequence is DVSHELKTPL…KFIIRLPLTA (217 aa). His257 is modified (phosphohistidine; by autocatalysis).

The protein localises to the cell membrane. It catalyses the reaction ATP + protein L-histidine = ADP + protein N-phospho-L-histidine.. Functionally, could be member of the two-component regulatory system YclK/YclJ. Potentially phosphorylates YclJ. The sequence is that of Sensor histidine kinase YclK (yclK) from Bacillus subtilis (strain 168).